The sequence spans 150 residues: Arginine repressor (150 aa).

The protein belongs to the ArgR family.

It is found in the cytoplasm. The protein operates within amino-acid biosynthesis; L-arginine biosynthesis [regulation]. Regulates arginine biosynthesis genes. This Psychromonas ingrahamii (strain DSM 17664 / CCUG 51855 / 37) protein is Arginine repressor.